The sequence spans 453 residues: Na(+)/H(+) antiporter NhaA (453 aa).

The next 12 helical transmembrane spans lie at 27-47, 78-98, 114-134, 143-163, 172-192, 201-221, 222-242, 249-269, 316-336, 346-366, 385-405, and 421-441; these read FLHI…AALM, LHFW…GMEI, ILPI…YFSF, GWAV…ALLG, IILL…IAFF, GLVI…IGFA, SAWL…VTGI, VILG…PLTI, PWVA…VSFA, FLIV…GIIT, WAGI…SIFV, and IGVL…GLIY.

Belongs to the NhaA Na(+)/H(+) (TC 2.A.33) antiporter family.

Its subcellular location is the cell inner membrane. The enzyme catalyses Na(+)(in) + 2 H(+)(out) = Na(+)(out) + 2 H(+)(in). In terms of biological role, na(+)/H(+) antiporter that extrudes sodium in exchange for external protons. This Bartonella henselae (strain ATCC 49882 / DSM 28221 / CCUG 30454 / Houston 1) (Rochalimaea henselae) protein is Na(+)/H(+) antiporter NhaA.